We begin with the raw amino-acid sequence, 706 residues long: Centrosomal protein kizuna (706 aa).

Residues 63–113 (QRAKTRNLELLGNVENLASKLKEFSIDCSRLLQKRMEYKNHITRLKKDRRK) are a coiled coil. Over residues 105 to 116 (TRLKKDRRKMGS) the composition is skewed to basic residues. Disordered stretches follow at residues 105–184 (TRLK…LCMH), 215–347 (VREK…ASRG), 571–603 (EIKP…QSPV), 620–665 (SVAQ…KTKP), and 677–706 (ESDD…DFYD). Basic and acidic residues predominate over residues 118–127 (GKSEADEHPS). Polar residues-rich tracts occupy residues 128 to 156 (RLST…NDGA) and 164 to 180 (HTEQ…SQSG). Residues 215-251 (VREKQMESDWDISQRAREQQRQEELKSPHTTLKEAEV) are compositionally biased toward basic and acidic residues. The span at 272–283 (TRSPSPDTTDPS) shows a compositional bias: low complexity. Over residues 293–304 (GEDEEESAEDKD) the composition is skewed to acidic residues. Over residues 308 to 320 (PINQNHSDYTSNI) the composition is skewed to polar residues. A compositionally biased stretch (acidic residues) spans 586-598 (EEQEIQSAEEDSA). A compositionally biased stretch (basic and acidic residues) spans 638–648 (PDAHKLEKPEV).

It belongs to the kizuna family.

Its subcellular location is the cytoplasm. The protein resides in the cytoskeleton. It is found in the microtubule organizing center. It localises to the centrosome. The protein localises to the cilium basal body. Functionally, centrosomal protein required for establishing a robust mitotic centrosome architecture that can endure the forces that converge on the centrosomes during spindle formation. Required for stabilizing the expanded pericentriolar material around the centriole. This chain is Centrosomal protein kizuna (kiz), found in Danio rerio (Zebrafish).